The following is a 245-amino-acid chain: Membrane-associated progesterone-binding protein 4 (245 aa).

A helical transmembrane segment spans residues 6–26; it reads RFLLSPFVGVTFIVVLVSLYF. Residues 39 to 138 enclose the Cytochrome b5 heme-binding domain; that stretch reads KRLFSAEELA…RTYTPVGKLV (100 aa). Residues 45–138 form a steroid-binding region; that stretch reads EELALYNGTD…RTYTPVGKLV (94 aa).

This sequence belongs to the cytochrome b5 family. MAPR subfamily.

It is found in the membrane. The polypeptide is Membrane-associated progesterone-binding protein 4 (Arabidopsis thaliana (Mouse-ear cress)).